We begin with the raw amino-acid sequence, 419 residues long: Serine hydroxymethyltransferase (419 aa).

(6S)-5,6,7,8-tetrahydrofolate-binding positions include Leu-119 and 123–125 (GHL). Lys-228 bears the N6-(pyridoxal phosphate)lysine mark.

It belongs to the SHMT family. Homodimer. The cofactor is pyridoxal 5'-phosphate.

Its subcellular location is the cytoplasm. It carries out the reaction (6R)-5,10-methylene-5,6,7,8-tetrahydrofolate + glycine + H2O = (6S)-5,6,7,8-tetrahydrofolate + L-serine. Its pathway is one-carbon metabolism; tetrahydrofolate interconversion. The protein operates within amino-acid biosynthesis; glycine biosynthesis; glycine from L-serine: step 1/1. Catalyzes the reversible interconversion of serine and glycine with tetrahydrofolate (THF) serving as the one-carbon carrier. This reaction serves as the major source of one-carbon groups required for the biosynthesis of purines, thymidylate, methionine, and other important biomolecules. Also exhibits THF-independent aldolase activity toward beta-hydroxyamino acids, producing glycine and aldehydes, via a retro-aldol mechanism. The polypeptide is Serine hydroxymethyltransferase (Desulfosudis oleivorans (strain DSM 6200 / JCM 39069 / Hxd3) (Desulfococcus oleovorans)).